The chain runs to 557 residues: MASMMQPQIILLKEGTDTSQGKAQLVSNINACTAVGDVVRTTLGPRGMDKLIHDDKGSVTISNDGATIMKLLDIVHPAAKILVDIAKSQDSEVGDGTTTVVLLAAEFLKEAKPFIEDGVHAQNLIRSYRTASTLAIAKVKELAVSIEGKSVEEKKGLLAKCAATTLSSKLIGGEKEFFATMVVDAVMAIGNDDRLNLIGIKKVPGGNMRDSFLVDGVAFKKTFSYAGFEQQPKKFLNPKILLLNIELELKSEKENAEIRLSDPSQYQSIVDAEWNIIYDKLDKCVESGAKVVLSRLAIGDLATQYFADRDIFCAGRVAEEDLNRVAAAAGGTVQTSVNNIIDEVLGTCEIFEEKQVGGERFNIFSGCPSGRTATIVLRGGADQFIEEAERSLHDAIMIVRRAVKNSTVVPGGGAIDMEISKYLRQHSRTIAGKSQLFINSYAKALEVIPRQLCDNAGFDATDVLNKLRQKHAMQSGEGASYGVDINTGGIADSFANFVWEPAVVKINAINAATEAACLILSVDETVKNPKSESAQGDAAGAMGRGRGGGRGRGMRRR.

Ala2 is subject to N-acetylalanine. Positions Pro529–Arg557 are disordered. The segment covering Gly547–Arg557 has biased composition (basic residues).

The protein belongs to the TCP-1 chaperonin family. Heterooligomeric complex of about 850 to 900 kDa that forms two stacked rings, 12 to 16 nm in diameter. Interacts with KNAT1.

The protein localises to the cytoplasm. Molecular chaperone; assists the folding of proteins upon ATP hydrolysis. Known to play a role, in vitro, in the folding of actin and tubulin. The chain is T-complex protein 1 subunit eta from Arabidopsis thaliana (Mouse-ear cress).